Reading from the N-terminus, the 123-residue chain is Large ribosomal subunit protein uL18 (123 aa).

It belongs to the universal ribosomal protein uL18 family. In terms of assembly, part of the 50S ribosomal subunit; part of the 5S rRNA/L5/L18/L25 subcomplex. Contacts the 5S and 23S rRNAs.

In terms of biological role, this is one of the proteins that bind and probably mediate the attachment of the 5S RNA into the large ribosomal subunit, where it forms part of the central protuberance. In Chlamydia muridarum (strain MoPn / Nigg), this protein is Large ribosomal subunit protein uL18.